The sequence spans 301 residues: G-protein coupled receptor homolog U51 (301 aa).

Over 1-15 the chain is Extracellular; sequence MEKETKSLAWPATAE. The helical transmembrane segment at 16–36 threads the bilayer; the sequence is FYGWVFIFSSIQLCTVVFLTV. Topologically, residues 37–48 are cytoplasmic; that stretch reads RFNGFKVGREYA. Residues 49–69 form a helical membrane-spanning segment; the sequence is VFTFAGMSFNCFLLPIKMGLL. The Extracellular segment spans residues 70 to 82; it reads SGHWTLPRDFCAI. A helical transmembrane segment spans residues 83–103; that stretch reads LLYIDDFSAYFSSWSLVFMAI. The Cytoplasmic portion of the chain corresponds to 104 to 122; the sequence is ERINYFCYSTPLLNENSKA. A helical membrane pass occupies residues 123 to 143; sequence LAKVCFPIVWVVSGVQALQML. The Extracellular portion of the chain corresponds to 144–168; that stretch reads NNYKATALQNETGQCFLAFLRSGHD. An N-linked (GlcNAc...) asparagine; by host glycan is attached at Asn-153. Residues 169–189 traverse the membrane as a helical segment; it reads MWLMLVYSVVIPVMLVFFYLY. The Cytoplasmic segment spans residues 190-199; the sequence is SKNFMLLKDE. Residues 200 to 220 traverse the membrane as a helical segment; the sequence is LSSVTTYLCIYLLLGTIAHLP. Residues 221-238 lie on the Extracellular side of the membrane; the sequence is KAALSEIESDKIFYGLRD. Residues 239–259 form a helical membrane-spanning segment; sequence IFMALPVLKVYYISAMAYCMA. At 260 to 301 the chain is on the cytoplasmic side; sequence CDDHTVPVRLCSIWLVNLCKKCFSCTRREKGSDLEVGIKMLK.

It belongs to the G-protein coupled receptor 1 family.

The protein resides in the host cell membrane. This chain is G-protein coupled receptor homolog U51 (U51), found in Homo sapiens (Human).